A 467-amino-acid polypeptide reads, in one-letter code: Glutamate--tRNA ligase (467 aa).

The 'HIGH' region signature appears at 13 to 23 (PSPTGYLHVGG). The 'KMSKS' region signature appears at 245 to 249 (KLSKR). K248 contributes to the ATP binding site.

This sequence belongs to the class-I aminoacyl-tRNA synthetase family. Glutamate--tRNA ligase type 1 subfamily. As to quaternary structure, monomer.

It is found in the cytoplasm. The catalysed reaction is tRNA(Glu) + L-glutamate + ATP = L-glutamyl-tRNA(Glu) + AMP + diphosphate. In terms of biological role, catalyzes the attachment of glutamate to tRNA(Glu) in a two-step reaction: glutamate is first activated by ATP to form Glu-AMP and then transferred to the acceptor end of tRNA(Glu). This is Glutamate--tRNA ligase from Herminiimonas arsenicoxydans.